Reading from the N-terminus, the 386-residue chain is 3-hydroxyisobutyryl-CoA hydrolase, mitochondrial (386 aa).

A mitochondrion-targeting transit peptide spans 1 to 32 (MGLQGLCRLMSRFNSYKRTNIILQHLKMSNHT). Lys-92 is subject to N6-acetyllysine; alternate. An N6-succinyllysine; alternate modification is found at Lys-92. Substrate contacts are provided by Glu-121, Gly-146, Glu-169, and Asp-177. Lys-221 is modified (N6-acetyllysine; alternate). Lys-221 carries the N6-succinyllysine; alternate modification. Ser-234 carries the post-translational modification Phosphoserine. N6-succinyllysine occurs at positions 250 and 257. At Lys-297 the chain carries N6-acetyllysine; alternate. Lys-297 is modified (N6-succinyllysine; alternate). Residue Lys-301 is modified to N6-succinyllysine. Lys-353 carries the post-translational modification N6-acetyllysine; alternate. The residue at position 353 (Lys-353) is an N6-succinyllysine; alternate. Ser-356 carries the phosphoserine modification. An N6-acetyllysine mark is found at Lys-360 and Lys-365. Residue Lys-377 is modified to N6-succinyllysine.

The protein belongs to the enoyl-CoA hydratase/isomerase family.

The protein localises to the mitochondrion. The catalysed reaction is 3-hydroxy-2-methylpropanoyl-CoA + H2O = 3-hydroxy-2-methylpropanoate + CoA + H(+). The protein operates within amino-acid degradation; L-valine degradation. In terms of biological role, hydrolyzes 3-hydroxyisobutyryl-CoA (HIBYL-CoA), a saline catabolite. Has high activity toward isobutyryl-CoA. Could be an isobutyryl-CoA dehydrogenase that functions in valine catabolism. Also hydrolyzes 3-hydroxypropanoyl-CoA. The chain is 3-hydroxyisobutyryl-CoA hydrolase, mitochondrial (HIBCH) from Bos taurus (Bovine).